The primary structure comprises 193 residues: Small ribosomal subunit protein uS7 (193 aa).

This sequence belongs to the universal ribosomal protein uS7 family. As to quaternary structure, part of the 30S ribosomal subunit.

In terms of biological role, one of the primary rRNA binding proteins, it binds directly to 16S rRNA where it nucleates assembly of the head domain of the 30S subunit. Is located at the subunit interface close to the decoding center. The polypeptide is Small ribosomal subunit protein uS7 (Saccharolobus solfataricus (strain ATCC 35092 / DSM 1617 / JCM 11322 / P2) (Sulfolobus solfataricus)).